A 125-amino-acid polypeptide reads, in one-letter code: Protein Turandot F (125 aa).

The signal sequence occupies residues 1 to 19 (MKTVILFGFLLALLGYLEA).

It belongs to the Turandot family.

Its subcellular location is the secreted. A humoral factor that may play a role in stress tolerance. This Drosophila melanogaster (Fruit fly) protein is Protein Turandot F.